The chain runs to 639 residues: 1-deoxy-D-xylulose-5-phosphate synthase (639 aa).

Thiamine diphosphate contacts are provided by residues His-79 and 120–122; that span reads GHS. A Mg(2+)-binding site is contributed by Asp-151. Residues 152-153, Asn-180, Tyr-289, and Glu-371 contribute to the thiamine diphosphate site; that span reads GS. Asn-180 is a Mg(2+) binding site.

This sequence belongs to the transketolase family. DXPS subfamily. Homodimer. Requires Mg(2+) as cofactor. It depends on thiamine diphosphate as a cofactor.

The enzyme catalyses D-glyceraldehyde 3-phosphate + pyruvate + H(+) = 1-deoxy-D-xylulose 5-phosphate + CO2. Its pathway is metabolic intermediate biosynthesis; 1-deoxy-D-xylulose 5-phosphate biosynthesis; 1-deoxy-D-xylulose 5-phosphate from D-glyceraldehyde 3-phosphate and pyruvate: step 1/1. Its function is as follows. Catalyzes the acyloin condensation reaction between C atoms 2 and 3 of pyruvate and glyceraldehyde 3-phosphate to yield 1-deoxy-D-xylulose-5-phosphate (DXP). The chain is 1-deoxy-D-xylulose-5-phosphate synthase from Agrobacterium fabrum (strain C58 / ATCC 33970) (Agrobacterium tumefaciens (strain C58)).